A 160-amino-acid polypeptide reads, in one-letter code: MRKKRNKNLYGEVYALGQHISMSAHKARRVIDQIRGRSYEETLMILELMPYRACYPIFKLVYSAAANASHNMGFNEASLVISKAEVNEGTTMKKLKPRARGRSYAIKRPTCHIRIVLKDKSFYEEENFFCLKQSEWKKKKKYTDMTYHYMDKGGGLWDKK.

Belongs to the universal ribosomal protein uL22 family. As to quaternary structure, part of the 50S ribosomal subunit.

It localises to the plastid. Its subcellular location is the chloroplast. Its function is as follows. This protein binds specifically to 23S rRNA. In terms of biological role, the globular domain of the protein is located near the polypeptide exit tunnel on the outside of the subunit, while an extended beta-hairpin is found that lines the wall of the exit tunnel in the center of the 70S ribosome. This is Large ribosomal subunit protein uL22c (rpl22) from Eucalyptus globulus subsp. globulus (Tasmanian blue gum).